A 338-amino-acid polypeptide reads, in one-letter code: RNA 3'-terminal phosphate cyclase (338 aa).

ATP contacts are provided by residues Gln103 and 283-287; that span reads YLADQ. Catalysis depends on His308, which acts as the Tele-AMP-histidine intermediate.

The protein belongs to the RNA 3'-terminal cyclase family. Type 1 subfamily.

Its subcellular location is the cytoplasm. It carries out the reaction a 3'-end 3'-phospho-ribonucleotide-RNA + ATP = a 3'-end 2',3'-cyclophospho-ribonucleotide-RNA + AMP + diphosphate. Its function is as follows. Catalyzes the conversion of 3'-phosphate to a 2',3'-cyclic phosphodiester at the end of RNA. The mechanism of action of the enzyme occurs in 3 steps: (A) adenylation of the enzyme by ATP; (B) transfer of adenylate to an RNA-N3'P to produce RNA-N3'PP5'A; (C) and attack of the adjacent 2'-hydroxyl on the 3'-phosphorus in the diester linkage to produce the cyclic end product. The biological role of this enzyme is unknown but it is likely to function in some aspects of cellular RNA processing. This is RNA 3'-terminal phosphate cyclase from Escherichia coli O9:H4 (strain HS).